We begin with the raw amino-acid sequence, 449 residues long: Trigger factor (449 aa).

A PPIase FKBP-type domain is found at 169-254 (GDRITVDFVG…AKQVEAPGEL (86 aa)).

Belongs to the FKBP-type PPIase family. Tig subfamily.

It localises to the cytoplasm. The catalysed reaction is [protein]-peptidylproline (omega=180) = [protein]-peptidylproline (omega=0). Involved in protein export. Acts as a chaperone by maintaining the newly synthesized protein in an open conformation. Functions as a peptidyl-prolyl cis-trans isomerase. This is Trigger factor from Azorhizobium caulinodans (strain ATCC 43989 / DSM 5975 / JCM 20966 / LMG 6465 / NBRC 14845 / NCIMB 13405 / ORS 571).